The following is a 1941-amino-acid chain: Myosin light chain kinase, smooth muscle (1941 aa).

2 Ig-like C2-type domains span residues 33-122 and 156-244; these read PAFI…VELT and PKFA…AELS. Cysteine 177 and cysteine 228 are joined by a disulfide. Tyrosine 226 carries the phosphotyrosine; by ABL1 modification. The segment at 255–329 is disordered; that stretch reads AVRGTKAPSP…RKVPQSSILQ (75 aa). Residues 286 to 305 are compositionally biased toward polar residues; sequence NCPSPQRSGSSARATNSHLK. Residue serine 295 is modified to Phosphoserine. Residues 306-320 show a composition bias toward basic and acidic residues; sequence SPQEPKPKLCEDAPR. 2 positions are modified to phosphoserine: serine 333 and serine 355. Ig-like C2-type domains follow at residues 402-485, 502-587, 611-699, and 709-809; these read PRFE…GQVS, PSFS…ATVT, PIFL…AVLT, and PWFI…APPR. 2 disulfide bridges follow: cysteine 423-cysteine 475 and cysteine 523-cysteine 571. The residue at position 452 (tyrosine 452) is a Phosphotyrosine; by ABL1 and SRC. Cysteine 730 and cysteine 793 form a disulfide bridge. Position 780 is a phosphotyrosine; by ABL1 (tyrosine 780). 4 consecutive repeat copies span residues 856-883, 884-911, 912-939, and 940-966. The tract at residues 856-985 is 5 X 28 AA approximate tandem repeats; the sequence is DVRGLLKRRV…KKSPSENGGN (130 aa). The actin-binding (calcium/calmodulin-sensitive) stretch occupies residues 911-951; the sequence is MDFRANLQRQVKPKTISEEERKVHSPQQVDFRSVLAKKGTP. Residues 920 to 1120 form a disordered region; the sequence is QVKPKTISEE…KRPESQGSAP (201 aa). Serine 935 is modified (phosphoserine). Positions 936–951 are calmodulin-binding; it reads PQQVDFRSVLAKKGTP. The 1-5; truncated repeat unit spans residues 967–985; it reads DFRSVLGGKKKSPSENGGN. 5 tandem repeats follow at residues 990-1002, 1003-1014, 1015-1026, 1027-1038, and 1039-1049. The interval 990–1049 is 5 X 12 AA approximate tandem repeats; sequence LNVKAGESPTPAGDAQAIGALKPVGNAKPAETPKPIGNAKPTETLKPVGNTKPAETLKPI. The actin-binding (calcium/calmodulin-insensitive) stretch occupies residues 1048–1482; it reads PIANAQPSGS…TVTVNTEQKV (435 aa). Residues 1052-1065 are compositionally biased toward polar residues; it reads AQPSGSLKPVTNAQ. Over residues 1085–1099 the composition is skewed to basic and acidic residues; sequence AGKEEVKEVKNDVNC. Positions 1120–1208 constitute an Ig-like C2-type 7 domain; it reads PVFKEKLQDV…GQAECSCQVT (89 aa). Cysteine 1141 and cysteine 1192 are joined by a disulfide. The segment at 1212–1257 is disordered; that stretch reads AQTSENTKAPEMKSRRPKSSLPPVLGTESDATVKKKPAPKTPTKAA. In terms of domain architecture, Ig-like C2-type 8 spans 1260–1348; it reads PQIIQFPEDQ…GSRQAQVNLT (89 aa). Residues 1356 to 1449 form the Fibronectin type-III domain; sequence PAGTPCASDI…ESELTAVGEK (94 aa). The segment at 1435 to 1469 is disordered; sequence SEPSQESELTAVGEKPEEPKDEVEVSDDDEKEPEV. Residues 1453–1467 show a composition bias toward acidic residues; the sequence is PKDEVEVSDDDEKEP. A Phosphoserine modification is found at serine 1460. A Phosphotyrosine; by ABL1 modification is found at tyrosine 1471. A Protein kinase domain is found at 1486-1741; sequence YDIEERLGSG…CTQCLQHPWL (256 aa). ATP contacts are provided by residues 1492-1500 and lysine 1515; that span reads LGSGKFGQV. Phosphotyrosine; by ABL1 is present on tyrosine 1597. Aspartate 1607 (proton acceptor) is an active-site residue. Tyrosine 1657 carries the post-translational modification Phosphotyrosine; by ABL1. The calmodulin-binding stretch occupies residues 1733–1796; sequence TQCLQHPWLM…SGLSGRKSST (64 aa). Phosphoserine occurs at positions 1781, 1782, 1794, 1795, and 1798. Residues 1789–1809 are disordered; sequence LSGRKSSTGSPTSPINAEKLE. Residues 1792-1803 are compositionally biased toward polar residues; the sequence is RKSSTGSPTSPI. The residue at position 1800 (threonine 1800) is a Phosphothreonine. Phosphoserine is present on serine 1801. The region spanning 1831 to 1920 is the Ig-like C2-type 9 domain; it reads PYFSKTIRDL…GEATCTAELI (90 aa). Residues cysteine 1852 and cysteine 1904 are joined by a disulfide bond.

The protein belongs to the protein kinase superfamily. CAMK Ser/Thr protein kinase family. In terms of assembly, all isoforms including Telokin bind calmodulin. Interacts with CTTN; this interaction is reduced during thrombin-induced endothelial cell (EC) contraction but is promoted by the barrier-protective agonist sphingosine 1-phosphate (S1P) within lamellipodia. A complex made of ABL1, CTTN and MYLK regulates cortical actin-based cytoskeletal rearrangement critical to sphingosine 1-phosphate (S1P)-mediated endothelial cell (EC) barrier enhancement. Binds to NAA10/ARD1. Interacts with SVIL and PTK2B/PYK2. The cofactor is Mg(2+). Ca(2+) is required as a cofactor. In terms of processing, can probably be down-regulated by phosphorylation. Tyrosine phosphorylation by ABL1 increases kinase activity, reverses MLCK-mediated inhibition of Arp2/3-mediated actin polymerization, and enhances CTTN-binding. Phosphorylation by SRC at Tyr-452 promotes CTTN binding. Post-translationally, the C-terminus is deglutamylated by AGTPBP1/CCP1, AGBL1/CCP4 and AGBL4/CCP6, leading to the formation of Myosin light chain kinase, smooth muscle, deglutamylated form. The consequences of C-terminal deglutamylation are unknown. As to expression, smooth muscle isoform is expressed in all tissues with highest levels in bladder, uterus, vas deferens, colon, ileum, and tracheae. Isoform 1 is expressed in lung, bladder, and vas deferens. Telokin is expressed in smooth muscle cells of the gut, reproductive tract and urinary tract, including in uterus, vas deferens, bladder, colon, kidney, ureter and ovary. Telokin is also detected in the trachea.

It localises to the cytoplasm. The protein localises to the cell projection. The protein resides in the lamellipodium. It is found in the cleavage furrow. Its subcellular location is the cytoskeleton. It localises to the stress fiber. It carries out the reaction L-seryl-[myosin light chain] + ATP = O-phospho-L-seryl-[myosin light chain] + ADP + H(+). It catalyses the reaction L-threonyl-[myosin light chain] + ATP = O-phospho-L-threonyl-[myosin light chain] + ADP + H(+). Its function is as follows. Calcium/calmodulin-dependent myosin light chain kinase implicated in smooth muscle contraction via phosphorylation of myosin light chains (MLC). Also regulates actin-myosin interaction through a non-kinase activity. Phosphorylates PTK2B/PYK2 and myosin light-chains. Involved in the inflammatory response (e.g. apoptosis, vascular permeability, leukocyte diapedesis), cell motility and morphology, airway hyperreactivity and other activities relevant to asthma. Required for tonic airway smooth muscle contraction that is necessary for physiological and asthmatic airway resistance. Necessary for gastrointestinal motility. Implicated in the regulation of endothelial as well as vascular permeability, probably via the regulation of cytoskeletal rearrangements. In the nervous system it has been shown to control the growth initiation of astrocytic processes in culture and to participate in transmitter release at synapses formed between cultured sympathetic ganglion cells. Critical participant in signaling sequences that result in fibroblast apoptosis. Plays a role in the regulation of epithelial cell survival. Required for epithelial wound healing, especially during actomyosin ring contraction during purse-string wound closure. Mediates RhoA-dependent membrane blebbing. Triggers TRPC5 channel activity in a calcium-dependent signaling, by inducing its subcellular localization at the plasma membrane. Promotes cell migration (including tumor cells) and tumor metastasis. PTK2B/PYK2 activation by phosphorylation mediates ITGB2 activation and is thus essential to trigger neutrophil transmigration during acute lung injury (ALI). May regulate optic nerve head astrocyte migration. Probably involved in mitotic cytoskeletal regulation. Regulates tight junction probably by modulating ZO-1 exchange in the perijunctional actomyosin ring. Mediates burn-induced microvascular barrier injury; triggers endothelial contraction in the development of microvascular hyperpermeability by phosphorylating MLC. Essential for intestinal barrier dysfunction. Mediates Giardia spp.-mediated reduced epithelial barrier function during giardiasis intestinal infection via reorganization of cytoskeletal F-actin and tight junctional ZO-1. Necessary for hypotonicity-induced Ca(2+) entry and subsequent activation of volume-sensitive organic osmolyte/anion channels (VSOAC) in cervical cancer cells. In Mus musculus (Mouse), this protein is Myosin light chain kinase, smooth muscle.